We begin with the raw amino-acid sequence, 536 residues long: Apolipoprotein N-acyltransferase (536 aa).

7 helical membrane passes run 10-30, 42-62, 76-96, 107-127, 136-158, 181-201, and 212-232; these read IASGIILAWGWKRAVIALLAG, AWPVLFITFPIAVWLIDGSAA, WWFGFGYFVPGLYWIGYAFLV, AAICGLPAYLALFTALGFALA, LRILSLAVSLTISEWLRGHLLTG, IGIWGLTLLTVAIFASPAVLI, and AVPAMALGVLAAMTVFGGIRL. Residues 248–501 form the CN hydrolase domain; sequence MQPNLPQDAR…EGVLDSGLPA (254 aa). E295 (proton acceptor) is an active-site residue. K360 is an active-site residue. The Nucleophile role is filled by C413. The chain crosses the membrane as a helical span at residues 509-529; it reads ARVGELPAAVLVALVMMLVLL.

Belongs to the CN hydrolase family. Apolipoprotein N-acyltransferase subfamily.

The protein resides in the cell inner membrane. The enzyme catalyses N-terminal S-1,2-diacyl-sn-glyceryl-L-cysteinyl-[lipoprotein] + a glycerophospholipid = N-acyl-S-1,2-diacyl-sn-glyceryl-L-cysteinyl-[lipoprotein] + a 2-acyl-sn-glycero-3-phospholipid + H(+). Its pathway is protein modification; lipoprotein biosynthesis (N-acyl transfer). Functionally, catalyzes the phospholipid dependent N-acylation of the N-terminal cysteine of apolipoprotein, the last step in lipoprotein maturation. This chain is Apolipoprotein N-acyltransferase, found in Rhodopseudomonas palustris (strain ATCC BAA-98 / CGA009).